We begin with the raw amino-acid sequence, 454 residues long: MSHNDTIVAQATPPGRGGVGILRISGLKARGVAQEVLGKLPKPRYADYLPFKDVDGSALDQGIALWFPGPNSFTGEDVLELQGHGGPVILDLLLKRILTLPGVRIARPGEFSERAFLNDKLDLAQAEAIADLIDASSEQAARSALNSLQGAFSARVNHLVEALTHLRIYVEAAIDFPDEEIDFLSDGKIEAQLNGVIADLDAVRTEARQGSLLREGMKVVIAGRPNAGKSSLLNALAGREAAIVTDIAGTTRDVLREHIHIDGMPLHIIDTAGLRDANDEVERIGIERAWQEIEQADRVLFMVDGTTTDAVDPADIWPDFIARLPKNLPITVVRNKADITGETLGISEVNGHSLVRLSARTGEGVDVLRNNLKQSMGFETNMEGGFLARRRHLQALAEAANHLEQGKAQLLGAWAGELLAEELRLAQQSLSEITGEFTSDDLLGRIFSSFCIGK.

(6S)-5-formyl-5,6,7,8-tetrahydrofolate contacts are provided by Arg-23, Glu-80, and Lys-120. The region spanning 216-377 (GMKVVIAGRP…LRNNLKQSMG (162 aa)) is the TrmE-type G domain. Asn-226 contacts K(+). Residues 226–231 (NAGKSS), 245–251 (TDIAGTT), 270–273 (DTAG), 335–338 (NKAD), and 358–360 (SAR) contribute to the GTP site. Ser-230 is a binding site for Mg(2+). Positions 245, 247, and 250 each coordinate K(+). Thr-251 serves as a coordination point for Mg(2+). Lys-454 lines the (6S)-5-formyl-5,6,7,8-tetrahydrofolate pocket.

This sequence belongs to the TRAFAC class TrmE-Era-EngA-EngB-Septin-like GTPase superfamily. TrmE GTPase family. As to quaternary structure, homodimer. Heterotetramer of two MnmE and two MnmG subunits. It depends on K(+) as a cofactor.

It is found in the cytoplasm. Its function is as follows. Exhibits a very high intrinsic GTPase hydrolysis rate. Involved in the addition of a carboxymethylaminomethyl (cmnm) group at the wobble position (U34) of certain tRNAs, forming tRNA-cmnm(5)s(2)U34. In Salmonella paratyphi A (strain ATCC 9150 / SARB42), this protein is tRNA modification GTPase MnmE.